A 73-amino-acid polypeptide reads, in one-letter code: Omega-conotoxin CVID (73 aa).

A signal peptide spans 1–22; sequence MKLTCVVIVAVLLLTACQLITA. The propeptide occupies 23–45; the sequence is DDSRGTQKHRALRSDTKLSMSTR. 3 disulfides stabilise this stretch: Cys46–Cys61, Cys53–Cys65, and Cys60–Cys72. Residue Cys72 is modified to Cysteine amide.

The protein belongs to the conotoxin O1 superfamily. In terms of tissue distribution, expressed by the venom duct.

The protein localises to the secreted. Omega-conotoxins act at presynaptic membranes, they bind and block voltage-gated calcium channels. This toxin inhibits neurotransmitter release, it blocks N-type calcium channels, probably a N-type (Cav2.2/CACNA1B) calcium channel variant. The polypeptide is Omega-conotoxin CVID (Conus catus (Cat cone)).